A 1470-amino-acid chain; its full sequence is Calmodulin-regulated spectrin-associated protein 2 (1470 aa).

The Calponin-homology (CH) domain maps to 222–335 (WKLVPARYRK…FMAELFWWFE (114 aa)). Positions 374–397 (SSSSSDFTSRYTRPQTHSSVSGGI) are disordered. The segment covering 380 to 390 (FTSRYTRPQTH) has biased composition (polar residues). 2 positions are modified to phosphoserine: Ser402 and Ser404. Position 412 is a phosphothreonine (Thr412). Residues Ser450, Ser581, Ser582, Ser594, and Ser656 each carry the phosphoserine modification. Disordered regions lie at residues 580–622 (QSSP…EDSS) and 648–712 (ASNP…EGSE). Residue Thr661 is modified to Phosphothreonine. Ser663 is subject to Phosphoserine. Positions 663–682 (STKSQPGSSASSSSGVKMTS) are enriched in low complexity. A compositionally biased stretch (basic and acidic residues) spans 686–696 (QKFRKLNHTDG). Residues 739 to 776 (LLASEMVHLRMRLEEKRRAIEAQKKKMEAAFTKQRQKM) are a coiled coil. Over residues 796–835 (REEAAGAEDEKVYTDRAKEKESQKMDGQRSKSLADIKESM) the composition is skewed to basic and acidic residues. Positions 796-864 (REEAAGAEDE…QWNLTSPSEE (69 aa)) are disordered. A Phosphoserine modification is found at Ser845. A coiled-coil region spans residues 870–909 (ELLEYTKSIEKLNSSLHFLQQEMQRLSLQQEMLMQMREQQ). An MBD region region spans residues 905–1016 (MREQQSWVIS…IQTRSFVCFG (112 aa)). Residues Ser914 and Ser919 each carry the phosphoserine modification. Disordered stretches follow at residues 930-1059 (RQAG…PLES) and 1078-1099 (NEDQLNQPTDPPPKPVFPPTAP). Residues 935-946 (SSAAAPFSADSP) show a composition bias toward low complexity. Residues 952–971 (SPQSSTRKSASFSVKNQRTP) are compositionally biased toward polar residues. A phosphothreonine mark is found at Thr979, Thr984, and Thr986. 2 positions are modified to phosphoserine: Ser990 and Ser1001. A compositionally biased stretch (polar residues) spans 1001–1011 (SPSQVPIQTRS). 2 stretches are compositionally biased toward basic and acidic residues: residues 1020 to 1037 (EPQKEPKPKEEIKKEPSE) and 1044 to 1056 (SCDHNPGEKEVKP). The segment covering 1086–1098 (TDPPPKPVFPPTA) has biased composition (pro residues). Ser1129 carries the phosphoserine modification. Positions 1147 to 1219 (KDDQKAENDM…REFIRQEYMR (73 aa)) form a coiled coil. A compositionally biased stretch (basic and acidic residues) spans 1167-1233 (RLRREKETQL…KLMEDMDTVI (67 aa)). The tract at residues 1167–1327 (RLRREKETQL…TTSSVASGTE (161 aa)) is disordered. Residues 1268-1280 (SSLSLASLNTGDT) are compositionally biased toward polar residues. A phosphoserine mark is found at Ser1294, Ser1300, and Ser1302. Residues 1315-1327 (NASTTSSVASGTE) are compositionally biased toward polar residues. A CKK domain is found at 1330 to 1464 (GPKLYKEPSA…QTKRPVTPKK (135 aa)).

The protein belongs to the CAMSAP1 family. Interacts with CAMSAP3. Interacts with KATNA1 and KATNB1; leading to regulate the length of CAMSAP2-decorated microtubule stretches. Interacts with a complex formed by AKAP9 and PDE4DIP; this interaction, which is PDE4DIP isoform-specific, recruits CAMSAP2 to the Golgi. Interacts with MAPRE1/EB1. In terms of tissue distribution, present in the soma, axon, and dendritic shaft of hippocampal neurons (at protein level).

The protein localises to the cytoplasm. It is found in the cytoskeleton. The protein resides in the golgi apparatus. It localises to the cilium basal body. Key microtubule-organizing protein that specifically binds the minus-end of non-centrosomal microtubules and regulates their dynamics and organization. Specifically recognizes growing microtubule minus-ends and autonomously decorates and stabilizes microtubule lattice formed by microtubule minus-end polymerization. Acts on free microtubule minus-ends that are not capped by microtubule-nucleating proteins or other factors and protects microtubule minus-ends from depolymerization. In addition, it also reduces the velocity of microtubule polymerization. Through the microtubule cytoskeleton, also regulates the organization of cellular organelles including the Golgi and the early endosomes. Essential for the tethering, but not for nucleation of non-centrosomal microtubules at the Golgi: together with Golgi-associated proteins AKAP9 and PDE4DIP, required to tether non-centrosomal minus-end microtubules to the Golgi, an important step for polarized cell movement. Also acts as a regulator of neuronal polarity and development: localizes to non-centrosomal microtubule minus-ends in neurons and stabilizes non-centrosomal microtubules, which is required for neuronal polarity, axon specification and dendritic branch formation. Through the microtubule cytoskeleton, regulates the autophagosome transport. The protein is Calmodulin-regulated spectrin-associated protein 2 of Rattus norvegicus (Rat).